The sequence spans 186 residues: tRNA (cytidine(56)-2'-O)-methyltransferase (186 aa).

S-adenosyl-L-methionine-binding positions include Leu-84 and 110–114 (GAEKV).

It belongs to the aTrm56 family. As to quaternary structure, homodimer.

Its subcellular location is the cytoplasm. It carries out the reaction cytidine(56) in tRNA + S-adenosyl-L-methionine = 2'-O-methylcytidine(56) in tRNA + S-adenosyl-L-homocysteine + H(+). Functionally, specifically catalyzes the AdoMet-dependent 2'-O-ribose methylation of cytidine at position 56 in tRNAs. This Staphylothermus marinus (strain ATCC 43588 / DSM 3639 / JCM 9404 / F1) protein is tRNA (cytidine(56)-2'-O)-methyltransferase.